A 52-amino-acid polypeptide reads, in one-letter code: Large ribosomal subunit protein bL32c (52 aa).

It belongs to the bacterial ribosomal protein bL32 family.

The protein resides in the plastid. It localises to the chloroplast. The polypeptide is Large ribosomal subunit protein bL32c (Lobularia maritima (Sweet alyssum)).